We begin with the raw amino-acid sequence, 216 residues long: Phosphatidylserine decarboxylase proenzyme (216 aa).

Ser185 (schiff-base intermediate with substrate; via pyruvic acid) is an active-site residue. At Ser185 the chain carries Pyruvic acid (Ser); by autocatalysis.

This sequence belongs to the phosphatidylserine decarboxylase family. PSD-A subfamily. In terms of assembly, heterodimer of a large membrane-associated beta subunit and a small pyruvoyl-containing alpha subunit. The cofactor is pyruvate. Is synthesized initially as an inactive proenzyme. Formation of the active enzyme involves a self-maturation process in which the active site pyruvoyl group is generated from an internal serine residue via an autocatalytic post-translational modification. Two non-identical subunits are generated from the proenzyme in this reaction, and the pyruvate is formed at the N-terminus of the alpha chain, which is derived from the carboxyl end of the proenzyme. The post-translation cleavage follows an unusual pathway, termed non-hydrolytic serinolysis, in which the side chain hydroxyl group of the serine supplies its oxygen atom to form the C-terminus of the beta chain, while the remainder of the serine residue undergoes an oxidative deamination to produce ammonia and the pyruvoyl prosthetic group on the alpha chain.

Its subcellular location is the cell membrane. It carries out the reaction a 1,2-diacyl-sn-glycero-3-phospho-L-serine + H(+) = a 1,2-diacyl-sn-glycero-3-phosphoethanolamine + CO2. It participates in phospholipid metabolism; phosphatidylethanolamine biosynthesis; phosphatidylethanolamine from CDP-diacylglycerol: step 2/2. In terms of biological role, catalyzes the formation of phosphatidylethanolamine (PtdEtn) from phosphatidylserine (PtdSer). This is Phosphatidylserine decarboxylase proenzyme from Nitrosomonas eutropha (strain DSM 101675 / C91 / Nm57).